Reading from the N-terminus, the 218-residue chain is Redox-sensing transcriptional repressor Rex (218 aa).

The H-T-H motif DNA-binding region spans 18–57; it reads LYYRFIQSLHASGKQRVSSAELSEAVKVDSATIRRDFSYF. Position 92–97 (92–97) interacts with NAD(+); that stretch reads GVGHLG.

The protein belongs to the transcriptional regulatory Rex family. As to quaternary structure, homodimer.

The protein localises to the cytoplasm. In terms of biological role, modulates transcription in response to changes in cellular NADH/NAD(+) redox state. In Exiguobacterium sp. (strain ATCC BAA-1283 / AT1b), this protein is Redox-sensing transcriptional repressor Rex.